We begin with the raw amino-acid sequence, 30 residues long: Photosystem I reaction center subunit XII (30 aa).

A helical membrane pass occupies residues Ile7–Lys26.

The protein belongs to the PsaM family.

The protein localises to the plastid. Its subcellular location is the chloroplast thylakoid membrane. This is Photosystem I reaction center subunit XII from Porphyra purpurea (Red seaweed).